A 369-amino-acid polypeptide reads, in one-letter code: 4-hydroxy-3-methylbut-2-en-1-yl diphosphate synthase (flavodoxin) (369 aa).

The [4Fe-4S] cluster site is built by Cys270, Cys273, Cys305, and Glu312.

This sequence belongs to the IspG family. The cofactor is [4Fe-4S] cluster.

The enzyme catalyses (2E)-4-hydroxy-3-methylbut-2-enyl diphosphate + oxidized [flavodoxin] + H2O + 2 H(+) = 2-C-methyl-D-erythritol 2,4-cyclic diphosphate + reduced [flavodoxin]. It participates in isoprenoid biosynthesis; isopentenyl diphosphate biosynthesis via DXP pathway; isopentenyl diphosphate from 1-deoxy-D-xylulose 5-phosphate: step 5/6. In terms of biological role, converts 2C-methyl-D-erythritol 2,4-cyclodiphosphate (ME-2,4cPP) into 1-hydroxy-2-methyl-2-(E)-butenyl 4-diphosphate. In Pseudomonas putida (strain ATCC 700007 / DSM 6899 / JCM 31910 / BCRC 17059 / LMG 24140 / F1), this protein is 4-hydroxy-3-methylbut-2-en-1-yl diphosphate synthase (flavodoxin).